The primary structure comprises 380 residues: Endo-chitosanase C (380 aa).

Positions M1–G22 are cleaved as a signal peptide. The stretch at C276–C304 is one R3-1 repeat. The stretch at E311 to C341 is one R3-2 repeat. Residues E348–C378 form an R3-3 repeat.

Belongs to the glycosyl hydrolase 75 family.

It is found in the secreted. The catalysed reaction is Endohydrolysis of beta-(1-&gt;4)-linkages between D-glucosamine residues in a partly acetylated chitosan.. In terms of biological role, chitosanase catalyzing the endo-type cleavage of chitosan, the deacylated form of chitin. Chitosanase may be crucial in the degradation of the deacetylated portion of chitin in the fungal cell wall. Chitoolisaccharides produced by the hydrolysis of partially N-acetylated chitosan are known to have many biological activities, including antibacterial activity, immune-enhancing effects, and elicitor activity. In Aspergillus oryzae (Yellow koji mold), this protein is Endo-chitosanase C (csnC).